The primary structure comprises 592 residues: Aspartate--tRNA(Asp/Asn) ligase (592 aa).

Position 177 (Glu177) interacts with L-aspartate. Positions 201 to 204 (QIFK) are aspartate. Residues Arg223 and His452 each coordinate L-aspartate. 223-225 (RDE) contacts ATP. Glu486 is a binding site for ATP. L-aspartate is bound at residue Arg493. 538–541 (GIDR) contacts ATP.

This sequence belongs to the class-II aminoacyl-tRNA synthetase family. Type 1 subfamily. In terms of assembly, homodimer.

Its subcellular location is the cytoplasm. The catalysed reaction is tRNA(Asx) + L-aspartate + ATP = L-aspartyl-tRNA(Asx) + AMP + diphosphate. In terms of biological role, aspartyl-tRNA synthetase with relaxed tRNA specificity since it is able to aspartylate not only its cognate tRNA(Asp) but also tRNA(Asn). Reaction proceeds in two steps: L-aspartate is first activated by ATP to form Asp-AMP and then transferred to the acceptor end of tRNA(Asp/Asn). In Anaplasma marginale (strain Florida), this protein is Aspartate--tRNA(Asp/Asn) ligase.